The sequence spans 184 residues: Uroplakin-2 (184 aa).

The N-terminal stretch at 1-25 (MASTLPVQTLPLILILLAVLAPGTA) is a signal peptide. The propeptide occupies 26–84 (DFNISSLSGLLSPALTESLLIALPPCHLTGGNATLMVRRANDSKVVKSDFVVPPCRGRR). Residues asparagine 28, asparagine 57, and asparagine 66 are each glycosylated (N-linked (GlcNAc...) asparagine). Residues 85 to 155 (ELVSVVDSGS…IGLGMARTGG (71 aa)) lie on the Lumenal side of the membrane. The helical transmembrane segment at 156–180 (MVVITVLLSVAMFLLVVGLIVALHW) threads the bilayer. Residues 181–184 (DARK) are Cytoplasmic-facing.

It belongs to the uroplakin-2 family. As to quaternary structure, interacts with uroplakin-1a (UPK1A).

The protein localises to the cell membrane. Component of the asymmetric unit membrane (AUM); a highly specialized biomembrane elaborated by terminally differentiated urothelial cells. May play an important role in regulating the assembly of the AUM. This is Uroplakin-2 (Upk2) from Mus musculus (Mouse).